The primary structure comprises 693 residues: Polyribonucleotide nucleotidyltransferase (693 aa).

Positions 486 and 492 each coordinate Mg(2+). Residues 553–612 (PRIHTIKINPEKIKDVIGKGGSVIRMLTEETGTTIEIEDDGTVKISAVMQEKAKCAIQRI) form the KH domain. An S1 motif domain is found at 622-690 (GSVYTGKVTR…RQGRLRLSIK (69 aa)).

The protein belongs to the polyribonucleotide nucleotidyltransferase family. As to quaternary structure, component of the RNA degradosome, which is a multiprotein complex involved in RNA processing and mRNA degradation. Mg(2+) serves as cofactor.

The protein resides in the cytoplasm. The enzyme catalyses RNA(n+1) + phosphate = RNA(n) + a ribonucleoside 5'-diphosphate. Functionally, involved in mRNA degradation. Catalyzes the phosphorolysis of single-stranded polyribonucleotides processively in the 3'- to 5'-direction. The chain is Polyribonucleotide nucleotidyltransferase from Buchnera aphidicola subsp. Baizongia pistaciae (strain Bp).